Consider the following 212-residue polypeptide: Large ribosomal subunit protein uL3 (212 aa).

The tract at residues Gly147–Gly166 is disordered. Position 153 is an N5-methylglutamine (Gln153).

The protein belongs to the universal ribosomal protein uL3 family. In terms of assembly, part of the 50S ribosomal subunit. Forms a cluster with proteins L14 and L19. Post-translationally, methylated by PrmB.

Functionally, one of the primary rRNA binding proteins, it binds directly near the 3'-end of the 23S rRNA, where it nucleates assembly of the 50S subunit. This chain is Large ribosomal subunit protein uL3, found in Psychrobacter sp. (strain PRwf-1).